Here is a 56-residue protein sequence, read N- to C-terminus: MASKGARDLIRMVSSAGTGHFYTTDKNKRNTPDKLEMKKFDPVVRKHVMYKEAKIK.

Belongs to the bacterial ribosomal protein bL33 family.

The sequence is that of Large ribosomal subunit protein bL33 from Marinomonas sp. (strain MWYL1).